Here is an 885-residue protein sequence, read N- to C-terminus: Glycerol-3-phosphate acyltransferase (885 aa).

The span at 1-17 (MPEQNPLPFPDGQPSPP) shows a compositional bias: pro residues. The tract at residues 1 to 26 (MPEQNPLPFPDGQPSPPSTAAADTGA) is disordered. The HXXXXD motif signature appears at 362–367 (HRSHMD).

Belongs to the GPAT/DAPAT family.

It localises to the cell inner membrane. The enzyme catalyses sn-glycerol 3-phosphate + an acyl-CoA = a 1-acyl-sn-glycero-3-phosphate + CoA. It participates in phospholipid metabolism; CDP-diacylglycerol biosynthesis; CDP-diacylglycerol from sn-glycerol 3-phosphate: step 1/3. The polypeptide is Glycerol-3-phosphate acyltransferase (Xanthomonas axonopodis pv. citri (strain 306)).